Reading from the N-terminus, the 354-residue chain is Glutamine synthetase (354 aa).

One can recognise a GS beta-grasp domain in the interval 22–101; sequence IQAEYVWIDG…VLAETYNNDG (80 aa). One can recognise a GS catalytic domain in the interval 108-354; sequence HRHHAKKVFD…IIAETTILDK (247 aa).

Belongs to the glutamine synthetase family. Homooctamer.

The protein resides in the cytoplasm. The enzyme catalyses L-glutamate + NH4(+) + ATP = L-glutamine + ADP + phosphate + H(+). This Agaricus bisporus (White button mushroom) protein is Glutamine synthetase (glnA).